Consider the following 167-residue polypeptide: ATP synthase subunit b (167 aa).

The helical transmembrane segment at 8–28 (AEAEFWVGAGLLIFLGIVFFG) threads the bilayer.

Belongs to the ATPase B chain family. F-type ATPases have 2 components, F(1) - the catalytic core - and F(0) - the membrane proton channel. F(1) has five subunits: alpha(3), beta(3), gamma(1), delta(1), epsilon(1). F(0) has three main subunits: a(1), b(2) and c(10-14). The alpha and beta chains form an alternating ring which encloses part of the gamma chain. F(1) is attached to F(0) by a central stalk formed by the gamma and epsilon chains, while a peripheral stalk is formed by the delta and b chains.

The protein resides in the cell inner membrane. Its function is as follows. F(1)F(0) ATP synthase produces ATP from ADP in the presence of a proton or sodium gradient. F-type ATPases consist of two structural domains, F(1) containing the extramembraneous catalytic core and F(0) containing the membrane proton channel, linked together by a central stalk and a peripheral stalk. During catalysis, ATP synthesis in the catalytic domain of F(1) is coupled via a rotary mechanism of the central stalk subunits to proton translocation. Component of the F(0) channel, it forms part of the peripheral stalk, linking F(1) to F(0). This Phenylobacterium zucineum (strain HLK1) protein is ATP synthase subunit b.